A 630-amino-acid polypeptide reads, in one-letter code: tRNA uridine 5-carboxymethylaminomethyl modification enzyme MnmG (630 aa).

13 to 18 is a binding site for FAD; that stretch reads GGGHAG. 273–287 provides a ligand contact to NAD(+); that stretch reads GPRYCPSIEDKIHRF.

It belongs to the MnmG family. In terms of assembly, homodimer. Heterotetramer of two MnmE and two MnmG subunits. It depends on FAD as a cofactor.

Its subcellular location is the cytoplasm. Functionally, NAD-binding protein involved in the addition of a carboxymethylaminomethyl (cmnm) group at the wobble position (U34) of certain tRNAs, forming tRNA-cmnm(5)s(2)U34. This Pseudomonas entomophila (strain L48) protein is tRNA uridine 5-carboxymethylaminomethyl modification enzyme MnmG.